Reading from the N-terminus, the 859-residue chain is Low-density lipoprotein receptor-related protein 12 (859 aa).

Positions 1–32 (MARRWSTKESPRWRSALLLLFLAGVYGNGALA) are cleaved as a signal peptide. The Extracellular segment spans residues 33–492 (EHSENVHISG…ENCPVIVPTR (460 aa)). 2 disulfides stabilise this stretch: Cys-47/Cys-76 and Cys-103/Cys-122. The CUB 1 domain maps to 47 to 159 (CGETPEQIRA…KGFRLAYFSG (113 aa)). N-linked (GlcNAc...) asparagine glycosylation occurs at Asn-75. A glycan (N-linked (GlcNAc...) asparagine) is linked at Asn-146. LDL-receptor class A domains lie at 165–201 (NCACDQFRCGNGKCIPEAWKCNNMDECGDSSDEEICA) and 214–255 (PCAY…IDCD). 7 disulfide bridges follow: Cys-166/Cys-178, Cys-173/Cys-191, Cys-185/Cys-200, Cys-215/Cys-232, Cys-222/Cys-245, Cys-239/Cys-254, and Cys-259/Cys-285. The 114-residue stretch at 259–372 (CGQWLKYFYG…RGFNATYQVD (114 aa)) folds into the CUB 2 domain. N-linked (GlcNAc...) asparagine glycosylation is found at Asn-284 and Asn-366. LDL-receptor class A domains lie at 374–411 (FCLPWEIPCGGNWGCYTEQQRCDGYWHCPNGRDEINCT), 412–449 (MCQKEEFPCSRNGVCYPRSDRCNYQNHCPNGSDEKNCF), and 450–486 (FCQPGNFHCKNNRCVFESWVCDSQDDCGDGSDEENCP). Cystine bridges form between Cys-375–Cys-388, Cys-382–Cys-401, Cys-395–Cys-410, Cys-413–Cys-426, Cys-420–Cys-439, Cys-433–Cys-448, Cys-451–Cys-463, Cys-458–Cys-476, and Cys-470–Cys-485. An N-linked (GlcNAc...) asparagine glycan is attached at Asn-409. The N-linked (GlcNAc...) asparagine glycan is linked to Asn-441. A helical membrane pass occupies residues 493 to 513 (VITAAVIGSLICGLLLVIALG). Over 514 to 859 (CTCKLYSLRM…TSDDEALLLC (346 aa)) the chain is Cytoplasmic. Disordered regions lie at residues 623–678 (ADGD…LPQK), 693–723 (ASSSTQSTRGGHADNGRDVTSVEPPSVSPAR), 748–770 (SSVSQNQSPLRQLDNGVSGREDD), and 802–823 (QGQGLRQPYNATNPGVRPSNRD). Composition is skewed to polar residues over residues 748–757 (SSVSQNQSPL) and 802–814 (QGQGLRQPYNATN).

The protein belongs to the LDLR family. In terms of assembly, may interact with RACK1, ZFYVE9 and NMRK2.

The protein localises to the membrane. It localises to the coated pit. In terms of biological role, probable receptor, which may be involved in the internalization of lipophilic molecules and/or signal transduction. May act as a tumor suppressor. This is Low-density lipoprotein receptor-related protein 12 (LRP12) from Pongo abelii (Sumatran orangutan).